A 367-amino-acid polypeptide reads, in one-letter code: Chorismate synthase (367 aa).

R48 lines the NADP(+) pocket. Residues 125-127, 241-242, G285, 300-304, and R326 contribute to the FMN site; these read RSS, NA, and KPTSS.

The protein belongs to the chorismate synthase family. As to quaternary structure, homotetramer. FMNH2 is required as a cofactor.

The enzyme catalyses 5-O-(1-carboxyvinyl)-3-phosphoshikimate = chorismate + phosphate. Its pathway is metabolic intermediate biosynthesis; chorismate biosynthesis; chorismate from D-erythrose 4-phosphate and phosphoenolpyruvate: step 7/7. Functionally, catalyzes the anti-1,4-elimination of the C-3 phosphate and the C-6 proR hydrogen from 5-enolpyruvylshikimate-3-phosphate (EPSP) to yield chorismate, which is the branch point compound that serves as the starting substrate for the three terminal pathways of aromatic amino acid biosynthesis. This reaction introduces a second double bond into the aromatic ring system. This chain is Chorismate synthase, found in Dinoroseobacter shibae (strain DSM 16493 / NCIMB 14021 / DFL 12).